A 729-amino-acid polypeptide reads, in one-letter code: Fatty acid oxidation complex subunit alpha (729 aa).

The interval 1–189 is enoyl-CoA hydratase/isomerase; it reads MLYQGETLQL…KVGLVDAVVA (189 aa). Asp-296 lines the substrate pocket. The tract at residues 311-729 is 3-hydroxyacyl-CoA dehydrogenase; that stretch reads EAPKQAAVLG…LSDVSTGQPA (419 aa). Residues Met-324, Asp-343, 400 to 402, Lys-407, and Ser-429 contribute to the NAD(+) site; that span reads VVE. His-450 functions as the For 3-hydroxyacyl-CoA dehydrogenase activity in the catalytic mechanism. Asn-453 provides a ligand contact to NAD(+). Asn-500 and Tyr-660 together coordinate substrate.

The protein in the N-terminal section; belongs to the enoyl-CoA hydratase/isomerase family. In the C-terminal section; belongs to the 3-hydroxyacyl-CoA dehydrogenase family. Heterotetramer of two alpha chains (FadB) and two beta chains (FadA).

It carries out the reaction a (3S)-3-hydroxyacyl-CoA + NAD(+) = a 3-oxoacyl-CoA + NADH + H(+). The enzyme catalyses a (3S)-3-hydroxyacyl-CoA = a (2E)-enoyl-CoA + H2O. It catalyses the reaction a 4-saturated-(3S)-3-hydroxyacyl-CoA = a (3E)-enoyl-CoA + H2O. The catalysed reaction is (3S)-3-hydroxybutanoyl-CoA = (3R)-3-hydroxybutanoyl-CoA. It carries out the reaction a (3Z)-enoyl-CoA = a 4-saturated (2E)-enoyl-CoA. The enzyme catalyses a (3E)-enoyl-CoA = a 4-saturated (2E)-enoyl-CoA. It participates in lipid metabolism; fatty acid beta-oxidation. Functionally, involved in the aerobic and anaerobic degradation of long-chain fatty acids via beta-oxidation cycle. Catalyzes the formation of 3-oxoacyl-CoA from enoyl-CoA via L-3-hydroxyacyl-CoA. It can also use D-3-hydroxyacyl-CoA and cis-3-enoyl-CoA as substrate. This Serratia proteamaculans (strain 568) protein is Fatty acid oxidation complex subunit alpha.